The sequence spans 986 residues: Vacuolar membrane protease (986 aa).

Topologically, residues 1–20 (MATPRAQKFNPIAFTPGPVT) are cytoplasmic. A helical transmembrane segment spans residues 21–41 (LITTIVYLALLIPILVISLVV). Topologically, residues 42-392 (PPAPETSPEG…AFAVFRLHTL (351 aa)) are vacuolar. N53, N116, and N119 each carry an N-linked (GlcNAc...) asparagine glycan. Positions 175 and 187 each coordinate Zn(2+). The active-site Proton acceptor is E221. E222 lines the Zn(2+) pocket. N238 carries N-linked (GlcNAc...) asparagine glycosylation. Positions 247 and 320 each coordinate Zn(2+). A helical transmembrane segment spans residues 393 to 413 (FALSVTLLIVAPLVIFITAIV). Over 414 to 447 (LSKTDRMYLFSMSKSLGGTDERVSLRGLRGLFRT) the chain is Cytoplasmic. Residues 448–468 (PIILAVATVIPIGLAYLLEKV) form a helical membrane-spanning segment. Residues 469–477 (NPYIVHSSQ) are Vacuolar-facing. Residues 478-498 (FSVWSMMISVWIFLAWFLACA) form a helical membrane-spanning segment. Over 499-509 (ADFFRPSALHR) the chain is Cytoplasmic. Residues 510-530 (AYSYTWIFIATWVMLVINTVY) form a helical membrane-spanning segment. Topologically, residues 531 to 534 (ANQK) are vacuolar. A helical transmembrane segment spans residues 535 to 555 (GIAAGYFVFFYFSGSFLATWV). The Cytoplasmic portion of the chain corresponds to 556 to 665 (SYLELFALPR…WSWTLPRWTW (110 aa)). The segment at 595–620 (ELPSDTGPHAEYPGDADETDPTESTS) is disordered. A helical transmembrane segment spans residues 666-686 (VLQLLLLAPIVLILVGQLALF). The Vacuolar portion of the chain corresponds to 687 to 702 (LTTSMSQVGSDGVSTF). The helical transmembrane segment at 703–723 (IVYLACAVFTTLLFAPLFPFI) threads the bilayer. The Cytoplasmic portion of the chain corresponds to 724 to 729 (HRFTYH). A helical membrane pass occupies residues 730-750 (IPTFLFLVFVGTLIYNLVAFP). The Vacuolar portion of the chain corresponds to 751–986 (FSPANRLKMF…VEASHGITIQ (236 aa)). N-linked (GlcNAc...) asparagine glycosylation is found at N797, N840, and N948.

The protein belongs to the peptidase M28 family. The cofactor is Zn(2+).

The protein resides in the vacuole membrane. In terms of biological role, may be involved in vacuolar sorting and osmoregulation. The chain is Vacuolar membrane protease from Blastomyces gilchristii (strain SLH14081) (Blastomyces dermatitidis).